Consider the following 534-residue polypeptide: Ankyrin repeat and LEM domain-containing protein 1 (534 aa).

ANK repeat units lie at residues 4-35 (TACL…DPNL), 39-71 (DGAA…DPNA), 75-104 (EGLT…DPTL), and 108-137 (DGLR…PTQP). Residues 279–323 (HSSVPPMSDLQLLQALRALGYSPGPVTPFTRGHYLRRLQEAQASR) enclose the LEM domain. The 116-residue stretch at 370–485 (KSSFTYLLLD…ALGLQTLTNQ (116 aa)) folds into the GIY-YIG domain. The short motif at 498 to 505 (PPSRRRRL) is the Nuclear localization signal element.

In terms of assembly, interacts (via LEM domain) with BANF1; the interaction may favor BANF1 dimerization. In terms of tissue distribution, predominantly expressed in bone marrow, spleen, thymus, colon and ovary. Expressed also to a lesser extent in lymph nodes, liver and testis.

The protein resides in the cytoplasm. It is found in the nucleus. Its function is as follows. Endonuclease that probably plays a role in the DNA damage response and DNA repair. The chain is Ankyrin repeat and LEM domain-containing protein 1 from Mus musculus (Mouse).